We begin with the raw amino-acid sequence, 509 residues long: MDIRAAEISAILKDQIKNFGQEAEVSEVGQVLSVGDGIARVYGLDNVQAGEMVEFENGTRGMALNLETDNVGVVIFGADREIKEGQTVKRTRAIVDAPVGKGLLGRVVDALGNPIDGKGPIQADKRMRVDVKAPGIIPRKSVSEPMATGLKAIDALIPIGRGQRELIIGDRQTGKTAIALDTILNQKPLNAQPDENIKLYCVYVAVGQKRSTVAQFVKVLEEQGALEYSIIVAATASDPAPMQYIAPFTACTMGEFFRDNGMHAVIIYDDLSKQAVAYRQMSLLLRRPPGREAYPGDVFYLHSRLLERAAKLSKDHGSGSLTALPIIETQANDVSAYIPTNVISITDGQIFLETDLFFQGIRPAVNVGLSVSRVGSSAQTKATKKVAGKIKGELAQYREMAAFAQFGSDLDASTQRLLNRGSRLTELLKQPQFSPLKMEEQVCVIWAGTNGYLDPLPVNKVRAFEDGLLSLLRGKNVEILNSIRDSRDLSDDTAAKLKSVVEGFAKSFA.

169 to 176 (GDRQTGKT) contacts ATP.

The protein belongs to the ATPase alpha/beta chains family. F-type ATPases have 2 components, CF(1) - the catalytic core - and CF(0) - the membrane proton channel. CF(1) has five subunits: alpha(3), beta(3), gamma(1), delta(1), epsilon(1). CF(0) has three main subunits: a(1), b(2) and c(9-12). The alpha and beta chains form an alternating ring which encloses part of the gamma chain. CF(1) is attached to CF(0) by a central stalk formed by the gamma and epsilon chains, while a peripheral stalk is formed by the delta and b chains.

The protein resides in the cell inner membrane. It carries out the reaction ATP + H2O + 4 H(+)(in) = ADP + phosphate + 5 H(+)(out). Its function is as follows. Produces ATP from ADP in the presence of a proton gradient across the membrane. The alpha chain is a regulatory subunit. The polypeptide is ATP synthase subunit alpha (Bradyrhizobium diazoefficiens (strain JCM 10833 / BCRC 13528 / IAM 13628 / NBRC 14792 / USDA 110)).